The primary structure comprises 875 residues: Alanine--tRNA ligase (875 aa).

Residues histidine 564, histidine 568, cysteine 666, and histidine 670 each coordinate Zn(2+).

It belongs to the class-II aminoacyl-tRNA synthetase family. As to quaternary structure, homotetramer. It depends on Zn(2+) as a cofactor.

It localises to the cytoplasm. It catalyses the reaction tRNA(Ala) + L-alanine + ATP = L-alanyl-tRNA(Ala) + AMP + diphosphate. Catalyzes the attachment of alanine to tRNA(Ala) in a two-step reaction: alanine is first activated by ATP to form Ala-AMP and then transferred to the acceptor end of tRNA(Ala). Also edits incorrectly charged Ser-tRNA(Ala) and Gly-tRNA(Ala) via its editing domain. This is Alanine--tRNA ligase from Sodalis glossinidius (strain morsitans).